The chain runs to 570 residues: Putative ABC transporter ATP-binding protein SAV2684 (570 aa).

2 ABC transporter domains span residues 6–247 (ISFK…GIRE) and 304–537 (LELN…ASLR). Residues 40-47 (GASGSGKS) and 338-345 (GHNGAGKS) contribute to the ATP site.

Belongs to the ABC transporter superfamily.

The protein localises to the cell membrane. Functionally, probably part of an ABC transporter complex. Responsible for energy coupling to the transport system. This is Putative ABC transporter ATP-binding protein SAV2684 from Staphylococcus aureus (strain Mu50 / ATCC 700699).